Consider the following 302-residue polypeptide: 4-hydroxy-tetrahydrodipicolinate synthase (302 aa).

Thr50 is a pyruvate binding site. Tyr138 (proton donor/acceptor) is an active-site residue. The Schiff-base intermediate with substrate role is filled by Lys167. Val209 serves as a coordination point for pyruvate.

The protein belongs to the DapA family. As to quaternary structure, homotetramer; dimer of dimers.

It localises to the cytoplasm. It catalyses the reaction L-aspartate 4-semialdehyde + pyruvate = (2S,4S)-4-hydroxy-2,3,4,5-tetrahydrodipicolinate + H2O + H(+). Its pathway is amino-acid biosynthesis; L-lysine biosynthesis via DAP pathway; (S)-tetrahydrodipicolinate from L-aspartate: step 3/4. Catalyzes the condensation of (S)-aspartate-beta-semialdehyde [(S)-ASA] and pyruvate to 4-hydroxy-tetrahydrodipicolinate (HTPA). This Salinibacter ruber (strain DSM 13855 / M31) protein is 4-hydroxy-tetrahydrodipicolinate synthase.